We begin with the raw amino-acid sequence, 224 residues long: ATP-dependent dethiobiotin synthetase BioD (224 aa).

14 to 19 serves as a coordination point for ATP; it reads GIGKTV. Position 18 (Thr18) interacts with Mg(2+). Lys39 is a catalytic residue. Ser43 lines the substrate pocket. ATP is bound by residues Asp56, 117–120, and 177–178; these read EGVG and NE. Residues Asp56 and Glu117 each coordinate Mg(2+).

It belongs to the dethiobiotin synthetase family. As to quaternary structure, homodimer. Requires Mg(2+) as cofactor.

It is found in the cytoplasm. The catalysed reaction is (7R,8S)-7,8-diammoniononanoate + CO2 + ATP = (4R,5S)-dethiobiotin + ADP + phosphate + 3 H(+). The protein operates within cofactor biosynthesis; biotin biosynthesis; biotin from 7,8-diaminononanoate: step 1/2. Its function is as follows. Catalyzes a mechanistically unusual reaction, the ATP-dependent insertion of CO2 between the N7 and N8 nitrogen atoms of 7,8-diaminopelargonic acid (DAPA, also called 7,8-diammoniononanoate) to form a ureido ring. The polypeptide is ATP-dependent dethiobiotin synthetase BioD (Xanthomonas campestris pv. campestris (strain B100)).